The chain runs to 682 residues: Zinc finger protein 16 (682 aa).

A compositionally biased stretch (basic and acidic residues) spans 1–10; the sequence is MPSLRTRREE. The tract at residues 1-43 is disordered; it reads MPSLRTRREEAEMELSVPGPSPWTPAAQARVRDAPAVTHPGSA. Positions 62-210 are necessary for transcription activation; the sequence is YQQPDCDTRT…GVPTAESPLI (149 aa). Residues 209 to 231 form a C2H2-type 1; degenerate zinc finger; the sequence is LICNECGKTFQGNPDLIQRQIVH. A C2H2-type 2; degenerate zinc finger spans residues 237–259; it reads FMCDDCGKTFSQNSVLKNRHRSH. Residue K253 forms a Glycyl lysine isopeptide (Lys-Gly) (interchain with G-Cter in SUMO2) linkage. C2H2-type zinc fingers lie at residues 265–287, 293–315, 321–343, 349–371, 377–399, 405–427, 433–455, and 461–483; these read YQCS…QSHH, YMCN…QKSH, YECN…QRIH, YVCS…HRTH, FECG…QRVH, YECN…HRVH, YKCS…RRIH, and HVCN…QIIH. Required for nuclear localization stretches follow at residues 268 to 393 and 341 to 373; these read SECG…AHLR and RIHS…THTG. The required for nuclear localization stretch occupies residues 473–503; it reads SSVLRKHQIIHTGEKPYRCSVCGKAFSHSSA. Residue K487 is modified to N6-acetyllysine. 7 C2H2-type zinc fingers span residues 489-511, 517-539, 545-567, 573-595, 601-623, 629-651, and 657-679; these read YRCS…QGVH, YACH…QRVH, YECT…QRIH, HECN…QKVH, YTCV…QIIH, YKCS…QRIH, and YDCA…QLIH.

The protein belongs to the krueppel C2H2-type zinc-finger protein family. As to quaternary structure, interacts with INCA1; the interaction inhibits INCA1 activity and induces the cell cycle process. Ubiquitous.

The protein localises to the nucleus. Functionally, acts as a transcriptional activator. Promotes cell proliferation by facilitating the cell cycle phase transition from the S to G2/M phase. Involved in both the hemin- and phorbol myristate acetate (PMA)-induced erythroid and megakaryocytic differentiation, respectively. Also plays a role as an inhibitor of cell apoptosis. This Homo sapiens (Human) protein is Zinc finger protein 16 (ZNF16).